Reading from the N-terminus, the 1474-residue chain is SH3 and multiple ankyrin repeat domains protein 2 (1474 aa).

Residues 66-76 (LSPQLLQQTPS) show a composition bias toward polar residues. Positions 66-125 (LSPQLLQQTPSKPDGATKSLGSYAPGPRSRSPSLNRLGGAGEDGKRPQPPHWHVGSPFTP) are disordered. The SH3 domain occupies 148–207 (VPGRLFVAIKPYQPQVDGEIPLHRGDRVKVLSIGEGGFWEGSARGHIGWFPAECVEEVQC). The residue at position 162 (Gln162) is a Phosphoserine. The PDZ domain occupies 248–342 (TVVLQKKDNE…HLVLKVVTVT (95 aa)). Ser373 is subject to Phosphoserine. The segment at 392–413 (RKKKDKPEEIVPASKPSRTAEN) is disordered. At Ser457 the chain carries Phosphoserine. Residue Thr486 is modified to Phosphothreonine. Residues 504–534 (LSMPDTSEDIPPPPQSVPPSPPPPSPTTYNC) form a disordered region. Over residues 513-529 (IPPPPQSVPPSPPPPSP) the composition is skewed to pro residues. Residue Ser586 is modified to Phosphoserine. Disordered regions lie at residues 659 to 920 (TIIV…ADDK), 947 to 995 (PVAG…PAAA), and 1057 to 1153 (PALA…ESMD). The segment covering 666 to 678 (STSSSGKSSQGSS) has biased composition (low complexity). A compositionally biased stretch (basic and acidic residues) spans 711-722 (VRDREKRLEARR). Position 724 is a phosphoserine (Ser724). Positions 783–795 (LGGGEAGAQGEAG) are enriched in gly residues. Low complexity-rich tracts occupy residues 811–823 (PAAA…PASP) and 833–846 (RLLD…LALS). Basic and acidic residues-rich tracts occupy residues 847 to 868 (ARDR…KADL) and 899 to 920 (RRQE…ADDK). At Thr903 the chain carries Phosphothreonine. A compositionally biased stretch (polar residues) spans 1075–1085 (SLNSSQPANST). A compositionally biased stretch (basic and acidic residues) spans 1119 to 1130 (VDSRSSSDHHLE). Over residues 1131–1151 (TTSTISTVSSISTLSSEGGES) the composition is skewed to low complexity. The short motif at 1169 to 1175 (PPVPPKP) is the SH3-binding element. Disordered stretches follow at residues 1195-1216 (EDTD…SAQA) and 1260-1401 (NRGK…ISNK). Positions 1202–1212 (IPPPAPPPPPG) are enriched in pro residues. Low complexity predominate over residues 1291–1305 (STVSGTRSTTVTFTV). O-linked (GlcNAc) threonine glycosylation occurs at Thr1292. Polar residues predominate over residues 1307–1317 (PGTSQPITLQS). Ser1334 and Ser1338 each carry phosphoserine. Low complexity-rich tracts occupy residues 1352 to 1363 (SAAAASPSPTLS) and 1385 to 1399 (RSRS…QPIS). The region spanning 1411 to 1474 (WTKPDVADWL…ERALKQLLDR (64 aa)) is the SAM domain.

This sequence belongs to the SHANK family. As to quaternary structure, is part of a complex with DLG4/PSD-95 and DLGAP1/GKAP. Interacts with CTTN/cortactin SH3 domain, DLGAP1/GKAP and alpha-latrotoxin receptor 1. Interacts with DNM2, DBNL, GRID2, BAIAP2, SLC9A3, PLCB3 and CFTR. Interacts with ABI1 (via SH3 domain). Interacts (via proline-rich region) with PDE4D isoform 5 (via N-terminal region). Interacts with PDE4D isoform 33, isoform 4, isoform 7, isoform 8 and isoform 9 but not isoform 32 and isoform 6. Interacts weakly with PDE4D isoform 31. Interacts with ABI1. As to expression, expressed in epithelial cells (at protein level). All isoforms except isoform 7 are expressed predominantly in brain, with highest levels in olfactory bulb, cerebral cortex, cerebellum, central gray matter and hippocampus. Moderate levels of expression are seen in the caudate putamen, thalamic nuclei and brain stem. In cerebellum primarily expressed in Purkinje cells. Isoform 7 is not expressed in brain but expressed in liver, cholangiocytes and thymus. Isoform 7 is present in pancreas, colonic mucosa and thymocytes (at protein level).

The protein resides in the apical cell membrane. It localises to the cytoplasm. It is found in the synapse. The protein localises to the postsynaptic density. Its subcellular location is the cell projection. The protein resides in the growth cone. It localises to the dendritic spine. Functionally, seems to be an adapter protein in the postsynaptic density (PSD) of excitatory synapses that interconnects receptors of the postsynaptic membrane including NMDA-type and metabotropic glutamate receptors, and the actin-based cytoskeleton. May play a role in the structural and functional organization of the dendritic spine and synaptic junction. The chain is SH3 and multiple ankyrin repeat domains protein 2 (Shank2) from Rattus norvegicus (Rat).